A 424-amino-acid chain; its full sequence is Probable aminotransferase TAT4 (424 aa).

Belongs to the class-I pyridoxal-phosphate-dependent aminotransferase family. Requires pyridoxal 5'-phosphate as cofactor.

The chain is Probable aminotransferase TAT4 from Arabidopsis thaliana (Mouse-ear cress).